The primary structure comprises 92 residues: RNA-binding protein Hfq (92 aa).

Positions 9 to 68 (DPFLNALRRERVPVSIYLVNGIKLQGQVESFDQFVILLKNTVSQMVYKHAISTVVPARPF) constitute a Sm domain. Positions 68–92 (FNVSSHHNTPNQAAGYNASHDDSAE) are disordered. A compositionally biased stretch (polar residues) spans 69-81 (NVSSHHNTPNQAA).

This sequence belongs to the Hfq family. As to quaternary structure, homohexamer.

In terms of biological role, RNA chaperone that binds small regulatory RNA (sRNAs) and mRNAs to facilitate mRNA translational regulation in response to envelope stress, environmental stress and changes in metabolite concentrations. Also binds with high specificity to tRNAs. The polypeptide is RNA-binding protein Hfq (Shewanella loihica (strain ATCC BAA-1088 / PV-4)).